A 738-amino-acid polypeptide reads, in one-letter code: Transcription activator of gluconeogenesis SMAC_06113 (738 aa).

A disordered region spans residues 1 to 65; that stretch reads MPDDVGPAEA…KYDPKDPLRP (65 aa). 2 stretches are compositionally biased toward basic and acidic residues: residues 28 to 39 and 51 to 64; these read ATTKDDDEKMAE and GDQK…DPLR. A DNA-binding region (zn(2)-C6 fungal-type) is located at residues 74–102; it reads CYACQRAHLTCGDERPCQRCIKRGLAEAC. Disordered regions lie at residues 255 to 278, 328 to 404, 530 to 579, and 636 to 673; these read SSGA…GDVG, HAYA…KRQR, GTNS…KEQP, and SVPT…TGAN. 2 stretches are compositionally biased toward polar residues: residues 337–351 and 530–540; these read TSLQ…SPQP and GTNSDTLSVSS. Residues 475–546 form the PAS domain; that stretch reads ALFEHEEFMH…SVSSKGGRGG (72 aa). Composition is skewed to low complexity over residues 568–579 and 636–655; these read QQQQSQQQKEQP and SVPT…VNGG.

It belongs to the ERT1/acuK family.

It is found in the nucleus. Its function is as follows. Transcription factor which regulates nonfermentable carbon utilization. Activator of gluconeogenetic genes. The protein is Transcription activator of gluconeogenesis SMAC_06113 of Sordaria macrospora (strain ATCC MYA-333 / DSM 997 / K(L3346) / K-hell).